A 189-amino-acid polypeptide reads, in one-letter code: Leucine repeat adapter protein 25 (189 aa).

Serine 28 is subject to Phosphoserine. Positions 55-81 (LSRAARAPDGPRHAAGSANLGSAAGPR) are disordered. Residues 68–79 (AAGSANLGSAAG) show a composition bias toward low complexity. The LRR repeat unit spans residues 86-114 (LDSALAALRKEMVGLRQLDMSLLCQLWGL). Residues 141–174 (DSSYPPDAGLSDDDEPPDASLPPDPPPLTVPQTH) form a disordered region. Pro residues predominate over residues 159–169 (ASLPPDPPPLT). Serine 188 is modified (phosphoserine).

This sequence belongs to the FAM89 family. In terms of assembly, interacts with SKI. Interacts (via LRR repeat) with CDC42BPA (via AGC-kinase C-terminal domain) and CDC42BPB (via AGC-kinase C-terminal domain). Interacts (via LRR repeat) with LIMK1 (via LIM zinc-binding domains). Forms a tripartite complex with CDC42BPA, CDC42BPB and LIMK1.

It localises to the cytoplasm. The protein resides in the cell projection. The protein localises to the lamellipodium. Negatively regulates TGF-beta-induced signaling; in cooperation with SKI prevents the translocation of SMAD2 from the nucleus to the cytoplasm in response to TGF-beta. Acts as an adapter that mediates the specific recognition of LIMK1 by CDC42BPA and CDC42BPB in the lamellipodia. LRAP25-mediated CDC42BPA/CDC42BPB targeting to LIMK1 and the lamellipodium results in LIMK1 activation and the subsequent phosphorylation of CFL1 which is important for lamellipodial F-actin regulation. The chain is Leucine repeat adapter protein 25 from Rattus norvegicus (Rat).